The primary structure comprises 475 residues: 1-aminocyclopropane-1-carboxylate synthase CMA101 (475 aa).

An N6-(pyridoxal phosphate)lysine modification is found at K272.

This sequence belongs to the class-I pyridoxal-phosphate-dependent aminotransferase family. In terms of assembly, homodimer. Pyridoxal 5'-phosphate is required as a cofactor.

The catalysed reaction is S-adenosyl-L-methionine = 1-aminocyclopropane-1-carboxylate + S-methyl-5'-thioadenosine + H(+). Its pathway is alkene biosynthesis; ethylene biosynthesis via S-adenosyl-L-methionine; ethylene from S-adenosyl-L-methionine: step 1/2. Functionally, catalyzes the formation of 1-aminocyclopropane-1-carboxylate, a direct precursor of ethylene in higher plants. This chain is 1-aminocyclopropane-1-carboxylate synthase CMA101 (ACS2), found in Cucurbita maxima (Pumpkin).